The following is a 411-amino-acid chain: Imidazolonepropionase (411 aa).

2 residues coordinate Fe(3+): His78 and His80. Zn(2+) is bound by residues His78 and His80. 3 residues coordinate 4-imidazolone-5-propanoate: Arg87, Tyr150, and His183. Tyr150 lines the N-formimidoyl-L-glutamate pocket. His248 is a binding site for Fe(3+). Position 248 (His248) interacts with Zn(2+). Position 251 (Gln251) interacts with 4-imidazolone-5-propanoate. Asp322 provides a ligand contact to Fe(3+). Zn(2+) is bound at residue Asp322. The N-formimidoyl-L-glutamate site is built by Asn324 and Gly326. A 4-imidazolone-5-propanoate-binding site is contributed by Ser327.

It belongs to the metallo-dependent hydrolases superfamily. HutI family. It depends on Zn(2+) as a cofactor. Requires Fe(3+) as cofactor.

It is found in the cytoplasm. It carries out the reaction 4-imidazolone-5-propanoate + H2O = N-formimidoyl-L-glutamate. It functions in the pathway amino-acid degradation; L-histidine degradation into L-glutamate; N-formimidoyl-L-glutamate from L-histidine: step 3/3. In terms of biological role, catalyzes the hydrolytic cleavage of the carbon-nitrogen bond in imidazolone-5-propanoate to yield N-formimidoyl-L-glutamate. It is the third step in the universal histidine degradation pathway. The sequence is that of Imidazolonepropionase from Flavobacterium johnsoniae (strain ATCC 17061 / DSM 2064 / JCM 8514 / BCRC 14874 / CCUG 350202 / NBRC 14942 / NCIMB 11054 / UW101) (Cytophaga johnsonae).